The sequence spans 828 residues: Putative dual specificity tyrosine-phosphorylation-regulated kinase 3 homolog (828 aa).

Residues 1–14 are compositionally biased toward basic and acidic residues; sequence MVGSQEKKNNHIEL. The disordered stretch occupies residues 1 to 26; sequence MVGSQEKKNNHIELSETPATDKNNLN. The segment covering 17–26 has biased composition (polar residues); that stretch reads TPATDKNNLN. In terms of domain architecture, Protein kinase spans 276–589; it reads YEMLKIIGKG…PSEALKHPWL (314 aa). ATP is bound by residues 282-290 and lysine 305; that span reads IGKGSFGQV. Aspartate 402 functions as the Proton acceptor in the catalytic mechanism. Serine 616 bears the Phosphoserine mark.

This sequence belongs to the protein kinase superfamily. CMGC Ser/Thr protein kinase family. MNB/DYRK subfamily. In terms of processing, autophosphorylated on tyrosine residues.

The catalysed reaction is L-seryl-[protein] + ATP = O-phospho-L-seryl-[protein] + ADP + H(+). The enzyme catalyses L-threonyl-[protein] + ATP = O-phospho-L-threonyl-[protein] + ADP + H(+). It carries out the reaction L-tyrosyl-[protein] + ATP = O-phospho-L-tyrosyl-[protein] + ADP + H(+). The chain is Putative dual specificity tyrosine-phosphorylation-regulated kinase 3 homolog (Dyrk3) from Drosophila melanogaster (Fruit fly).